We begin with the raw amino-acid sequence, 153 residues long: Insulin-like growth factor 1 (153 aa).

The tract at residues 49-77 (GPETLCGAELVDALQFVCGDRGFYFNKPT) is b. 3 disulfides stabilise this stretch: Cys54–Cys96, Cys66–Cys109, and Cys95–Cys100. The segment at 78 to 89 (GYGSSSRRAPQT) is c. The interval 90–110 (GIVDECCFRSCDLRRLEMYCA) is a. The tract at residues 111–118 (PLKPAKSA) is d. Residues 119–153 (RSVRAQRHTDMPKAQKEVHLKNASRGSAGNKNYRM) constitute a propeptide, e peptide. The interval 120–153 (SVRAQRHTDMPKAQKEVHLKNASRGSAGNKNYRM) is disordered. Positions 125 to 138 (RHTDMPKAQKEVHL) are enriched in basic and acidic residues. Polar residues predominate over residues 142-153 (SRGSAGNKNYRM).

It belongs to the insulin family. In terms of assembly, forms a ternary complex with IGFR1 and ITGAV:ITGB3. Forms a ternary complex with IGFR1 and ITGA6:ITGB4. Forms a ternary complex with IGFBP3 and ALS.

Its subcellular location is the secreted. Functionally, the insulin-like growth factors, isolated from plasma, are structurally and functionally related to insulin but have a much higher growth-promoting activity. May be a physiological regulator of [1-14C]-2-deoxy-D-glucose (2DG) transport and glycogen synthesis in osteoblasts. Stimulates glucose transport in bone-derived osteoblastic (PyMS) cells and is effective at much lower concentrations than insulin, not only regarding glycogen and DNA synthesis but also with regard to enhancing glucose uptake. May play a role in synapse maturation. Ca(2+)-dependent exocytosis of IGF1 is required for sensory perception of smell in the olfactory bulb. Acts as a ligand for IGF1R. Binds to the alpha subunit of IGF1R, leading to the activation of the intrinsic tyrosine kinase activity which autophosphorylates tyrosine residues in the beta subunit thus initiating a cascade of down-stream signaling events leading to activation of the PI3K-AKT/PKB and the Ras-MAPK pathways. Binds to integrins ITGAV:ITGB3 and ITGA6:ITGB4. Its binding to integrins and subsequent ternary complex formation with integrins and IGFR1 are essential for IGF1 signaling. Induces the phosphorylation and activation of IGFR1, MAPK3/ERK1, MAPK1/ERK2 and AKT1. As part of the MAPK/ERK signaling pathway, acts as a negative regulator of apoptosis in cardiomyocytes via promotion of STUB1/CHIP-mediated ubiquitination and degradation of ICER-type isoforms of CREM. The sequence is that of Insulin-like growth factor 1 from Ailuropoda melanoleuca (Giant panda).